The chain runs to 36 residues: Histone H1-like protein EM5 (36 aa).

An H15 domain is found at 1–36; it reads MITAAVGALKERGGSSRQAILKYIQANFKVQANPAA.

This sequence belongs to the histone H1/H5 family. Sperm.

It is found in the nucleus. It localises to the chromosome. The protein is Histone H1-like protein EM5 of Ensis minor (Razor shell).